Here is a 194-residue protein sequence, read N- to C-terminus: MIGRLRGILAYKQPPWLVIDVGGVGYELEAPMSTFYDLPDVGRDVILFTHYAQKEDSVALYGFLREGERRLFRDVQKVTGIGAKIALAVLSGVSVDEFARLITSGDITALTRIPGIGKKTAERMVVELRDRAADFSSGAPITGQLGPDAVSEATVALQQLGYKPAEAARMARDAGAEGDEVATVIRKALQAALR.

Residues 1–64 (MIGRLRGILA…EDSVALYGFL (64 aa)) are domain I. A domain II region spans residues 65 to 140 (REGERRLFRD…RAADFSSGAP (76 aa)). Positions 140 to 144 (PITGQ) are flexible linker. The domain III stretch occupies residues 145–194 (LGPDAVSEATVALQQLGYKPAEAARMARDAGAEGDEVATVIRKALQAALR).

It belongs to the RuvA family. In terms of assembly, homotetramer. Forms an RuvA(8)-RuvB(12)-Holliday junction (HJ) complex. HJ DNA is sandwiched between 2 RuvA tetramers; dsDNA enters through RuvA and exits via RuvB. An RuvB hexamer assembles on each DNA strand where it exits the tetramer. Each RuvB hexamer is contacted by two RuvA subunits (via domain III) on 2 adjacent RuvB subunits; this complex drives branch migration. In the full resolvosome a probable DNA-RuvA(4)-RuvB(12)-RuvC(2) complex forms which resolves the HJ.

Its subcellular location is the cytoplasm. The RuvA-RuvB-RuvC complex processes Holliday junction (HJ) DNA during genetic recombination and DNA repair, while the RuvA-RuvB complex plays an important role in the rescue of blocked DNA replication forks via replication fork reversal (RFR). RuvA specifically binds to HJ cruciform DNA, conferring on it an open structure. The RuvB hexamer acts as an ATP-dependent pump, pulling dsDNA into and through the RuvAB complex. HJ branch migration allows RuvC to scan DNA until it finds its consensus sequence, where it cleaves and resolves the cruciform DNA. This chain is Holliday junction branch migration complex subunit RuvA, found in Xanthomonas euvesicatoria pv. vesicatoria (strain 85-10) (Xanthomonas campestris pv. vesicatoria).